The following is a 289-amino-acid chain: (3R)-3-[(carboxymethyl)amino]fatty acid oxygenase/decarboxylase (289 aa).

A (3R)-3-[(carboxymethyl)amino]fatty acid is bound by residues Y65, Y70, and G93. Fe(2+) is bound by residues H97 and D99. The a (3R)-3-[(carboxymethyl)amino]fatty acid site is built by Y100 and K158. H260 serves as a coordination point for Fe(2+). H264 lines the 2-oxoglutarate pocket. Residue R275 participates in a (3R)-3-[(carboxymethyl)amino]fatty acid binding.

This sequence belongs to the TfdA dioxygenase family. Fe(2+) is required as a cofactor.

It catalyses the reaction a (3R)-3-[(carboxymethyl)amino]fatty acid + 2 2-oxoglutarate + 2 O2 = a (3R)-3-isocyanyl-fatty acid + 2 succinate + 3 CO2 + 2 H2O. The catalysed reaction is a (3R)-3-[(carboxymethyl)amino]fatty acid + 2-oxoglutarate + O2 = a (3R)-3-{[carboxy(hydroxy)methyl]amino}fatty acid + succinate + CO2. The enzyme catalyses a (3R)-3-{[carboxy(hydroxy)methyl]amino}fatty acid + 2-oxoglutarate + O2 = a (3R)-3-isocyanyl-fatty acid + succinate + 2 CO2 + 2 H2O. Its function is as follows. Involved in the biosynthesis of a unique class of isonitrile lipopeptides (INLPs) that seem to play a role in metal acquisition. Catalyzes the conversion of (3R)-3-[(carboxymethyl)amino]fatty acids to (3R)-3-isocyanyl-fatty acids through an oxidative decarboxylation mechanism, thereby generating the isonitrile group of INLPs. This Mycobacterium bovis (strain ATCC BAA-935 / AF2122/97) protein is (3R)-3-[(carboxymethyl)amino]fatty acid oxygenase/decarboxylase.